A 303-amino-acid chain; its full sequence is 2-dehydropantoate 2-reductase (303 aa).

NADP(+)-binding positions include 7 to 12 (GCGALG), Asn98, and Ala122. Asn98 contacts substrate. The Proton donor role is filled by Lys176. Substrate-binding residues include Asn180, Asn184, Asn194, and Ser244. Glu256 lines the NADP(+) pocket.

Belongs to the ketopantoate reductase family. As to quaternary structure, monomer.

Its subcellular location is the cytoplasm. The enzyme catalyses (R)-pantoate + NADP(+) = 2-dehydropantoate + NADPH + H(+). The protein operates within cofactor biosynthesis; (R)-pantothenate biosynthesis; (R)-pantoate from 3-methyl-2-oxobutanoate: step 2/2. Functionally, catalyzes the NADPH-dependent reduction of ketopantoate into pantoic acid. The polypeptide is 2-dehydropantoate 2-reductase (panE) (Escherichia coli O157:H7).